Reading from the N-terminus, the 242-residue chain is MDQKMINDLKEQVFQTNLLLPKYGLVIHTWGNVSMIAPNRQFFVIKPSGVSYDKMRAQDMVVVDLDNNVLDTNGLKPSSDTPTHALMYKHCPDIKAIVHTHSTFATSFAQADKPIPCLGTTHADNFFGPIPCTRALSDSEINGAYEHNTGLVILEHLKNNQVDVNACAAILVKEHGSFVWSNKNGKDAVDRALTLEQVAQMALYTQMINPHMKEANPALQQKHYNRKHGKDAYYGQDTKQED.

Residues 31–32, 48–49, and 78–79 contribute to the substrate site; these read GN, SG, and SS. Zn(2+) contacts are provided by aspartate 80, histidine 99, and histidine 101. Catalysis depends on aspartate 124, which acts as the Proton donor/acceptor. Zn(2+) is bound at residue histidine 175. Tyrosine 234 acts as the Proton donor/acceptor in catalysis.

This sequence belongs to the aldolase class II family. AraD/FucA subfamily. Zn(2+) serves as cofactor.

The enzyme catalyses L-ribulose 5-phosphate = D-xylulose 5-phosphate. The protein operates within cofactor degradation; L-ascorbate degradation; D-xylulose 5-phosphate from L-ascorbate: step 4/4. Its function is as follows. Catalyzes the isomerization of L-ribulose 5-phosphate to D-xylulose 5-phosphate. Is involved in the anaerobic L-ascorbate utilization. The chain is Probable L-ribulose-5-phosphate 4-epimerase UlaF from Mycoplasma pneumoniae (strain ATCC 29342 / M129 / Subtype 1) (Mycoplasmoides pneumoniae).